The primary structure comprises 456 residues: Argininosuccinate lyase (456 aa).

It belongs to the lyase 1 family. Argininosuccinate lyase subfamily.

Its subcellular location is the cytoplasm. It catalyses the reaction 2-(N(omega)-L-arginino)succinate = fumarate + L-arginine. Its pathway is amino-acid biosynthesis; L-arginine biosynthesis; L-arginine from L-ornithine and carbamoyl phosphate: step 3/3. The chain is Argininosuccinate lyase from Listeria monocytogenes serotype 4b (strain F2365).